The following is a 49-amino-acid chain: Large ribosomal subunit protein bL33B (49 aa).

This sequence belongs to the bacterial ribosomal protein bL33 family.

In Bacillus licheniformis (strain ATCC 14580 / DSM 13 / JCM 2505 / CCUG 7422 / NBRC 12200 / NCIMB 9375 / NCTC 10341 / NRRL NRS-1264 / Gibson 46), this protein is Large ribosomal subunit protein bL33B.